Here is an 891-residue protein sequence, read N- to C-terminus: Kinesin-like protein KIN-UB (891 aa).

Residues 1–54 are disordered; the sequence is MSGKVANATPKAAAGKPRLSAAGGGAYRRTSSGPLPSAGGGGGRASSESGVSSR. The span at 45-54 shows a compositional bias: low complexity; the sequence is ASSESGVSSR. A Kinesin motor domain is found at 54–400; that stretch reads RVRVAVRLRP…IMFGQRAMKV (347 aa). Residue 139 to 146 coordinates ATP; sequence GQTGTGKT. The D-BOX motif lies at 370-378; sequence RTSLVVTIG. Residues 502 to 592 adopt a coiled-coil conformation; that stretch reads TSSEVGEVQN…ADETRRSLDR (91 aa). Basic and acidic residues predominate over residues 586 to 595; the sequence is TRRSLDRGDG. The segment at 586-626 is disordered; that stretch reads TRRSLDRGDGSGKIFPGFDSLMSHSRNSQPREQSNGPKPPI. Over residues 607 to 621 the composition is skewed to polar residues; it reads MSHSRNSQPREQSNG. ARM repeat units lie at residues 623–662, 664–704, 706–746, and 748–787; these read KPPIAKLFEQVGLQKILSLLESEEPDVRVHAVKVVANLAA, EANQ…NLAM, ETNQ…NLCG, and DKLQTRLRGEGGIKALLGMVKCGHPDVLAQVARGIANFAK.

This sequence belongs to the TRAFAC class myosin-kinesin ATPase superfamily. Kinesin family. Ungrouped subfamily.

Its subcellular location is the cytoplasm. It is found in the cytoskeleton. In Oryza sativa subsp. japonica (Rice), this protein is Kinesin-like protein KIN-UB.